The primary structure comprises 420 residues: Probable 3-isopropylmalate dehydratase large subunit (420 aa).

Positions 301, 361, and 364 each coordinate [4Fe-4S] cluster.

The protein belongs to the aconitase/IPM isomerase family. LeuC type 2 subfamily. Heterodimer of LeuC and LeuD. [4Fe-4S] cluster is required as a cofactor.

The catalysed reaction is (2R,3S)-3-isopropylmalate = (2S)-2-isopropylmalate. It participates in amino-acid biosynthesis; L-leucine biosynthesis; L-leucine from 3-methyl-2-oxobutanoate: step 2/4. Catalyzes the isomerization between 2-isopropylmalate and 3-isopropylmalate, via the formation of 2-isopropylmaleate. The protein is Probable 3-isopropylmalate dehydratase large subunit of Methanosarcina mazei (strain ATCC BAA-159 / DSM 3647 / Goe1 / Go1 / JCM 11833 / OCM 88) (Methanosarcina frisia).